A 366-amino-acid polypeptide reads, in one-letter code: Fe-S cluster assembly protein DRE2 (366 aa).

Positions 8–167 (AQGSGRFLLL…KPDFGAQQAV (160 aa)) are N-terminal SAM-like domain. The tract at residues 100–136 (RNRDNQIWGSGSDSAAGLGSSDGGGGGGGGEKKSSSE) is disordered. Residues 108–118 (GSGSDSAAGLG) show a composition bias toward low complexity. Residues 119–128 (SSDGGGGGGG) show a composition bias toward gly residues. The linker stretch occupies residues 168 to 258 (PLKLGRKKNL…EEELLGEFDM (91 aa)). Residues cysteine 268, cysteine 279, cysteine 282, and cysteine 284 each contribute to the [2Fe-2S] cluster site. Residues 268–284 (CRPKAGKRRRACKDCTC) are fe-S binding site A. [4Fe-4S] cluster contacts are provided by cysteine 329, cysteine 332, cysteine 340, and cysteine 343. 2 short sequence motifs (cx2C motif) span residues 329–332 (CGNC) and 340–343 (CDGC). The tract at residues 329–343 (CGNCALGDAFRCDGC) is fe-S binding site B.

Belongs to the anamorsin family. As to quaternary structure, monomer. Interacts with TAH18. Interacts with MIA40. The cofactor is [2Fe-2S] cluster. Requires [4Fe-4S] cluster as cofactor.

It localises to the cytoplasm. It is found in the mitochondrion intermembrane space. Its function is as follows. Component of the cytosolic iron-sulfur (Fe-S) protein assembly (CIA) machinery required for the maturation of extramitochondrial Fe-S proteins. Part of an electron transfer chain functioning in an early step of cytosolic Fe-S biogenesis, facilitating the de novo assembly of a [4Fe-4S] cluster on the scaffold complex CFD1-NBP35. Electrons are transferred to DRE2 from NADPH via the FAD- and FMN-containing protein TAH18. TAH18-DRE2 are also required for the assembly of the diferric tyrosyl radical cofactor of ribonucleotide reductase (RNR), probably by providing electrons for reduction during radical cofactor maturation in the catalytic small subunit RNR2. In Paracoccidioides lutzii (strain ATCC MYA-826 / Pb01) (Paracoccidioides brasiliensis), this protein is Fe-S cluster assembly protein DRE2.